Reading from the N-terminus, the 382-residue chain is UBP1-associated proteins 1B (382 aa).

The segment at 1–99 (MAKEGEERKK…SDESEEIVDS (99 aa)) is disordered. Basic residues predominate over residues 10–22 (KEKKEKKERKERK). The segment covering 23 to 34 (RREAEELAVREK) has biased composition (basic and acidic residues). One can recognise an RRM domain in the interval 163–248 (RNIFVRGLGW…RPFNSGKPRE (86 aa)).

It is found in the nucleus. Functionally, acts as a component of a complex regulating the turnover of mRNAs in the nucleus. Binds with high affinity to RNA molecules that contain U-rich sequences in 3'-UTRs. May function in complex with UBP1 and contribute to the stabilization of mRNAs in the nucleus. This chain is UBP1-associated proteins 1B (UBA1B), found in Arabidopsis thaliana (Mouse-ear cress).